The sequence spans 255 residues: Triosephosphate isomerase (255 aa).

9-11 contributes to the substrate binding site; it reads NWK. Histidine 95 (electrophile) is an active-site residue. The active-site Proton acceptor is glutamate 167. Residues glycine 173, serine 212, and 233–234 each bind substrate; that span reads GG.

This sequence belongs to the triosephosphate isomerase family. In terms of assembly, homodimer.

It localises to the cytoplasm. The catalysed reaction is D-glyceraldehyde 3-phosphate = dihydroxyacetone phosphate. Its pathway is carbohydrate biosynthesis; gluconeogenesis. It participates in carbohydrate degradation; glycolysis; D-glyceraldehyde 3-phosphate from glycerone phosphate: step 1/1. Involved in the gluconeogenesis. Catalyzes stereospecifically the conversion of dihydroxyacetone phosphate (DHAP) to D-glyceraldehyde-3-phosphate (G3P). This Erwinia tasmaniensis (strain DSM 17950 / CFBP 7177 / CIP 109463 / NCPPB 4357 / Et1/99) protein is Triosephosphate isomerase.